The primary structure comprises 199 residues: Pyridoxal 5'-phosphate synthase subunit PdxT (199 aa).

52–54 (GES) is a binding site for L-glutamine. Cys-84 functions as the Nucleophile in the catalytic mechanism. L-glutamine is bound by residues Arg-115 and 143 to 144 (IR). Residues His-179 and Glu-181 each act as charge relay system in the active site.

It belongs to the glutaminase PdxT/SNO family. As to quaternary structure, in the presence of PdxS, forms a dodecamer of heterodimers. Only shows activity in the heterodimer.

It carries out the reaction aldehydo-D-ribose 5-phosphate + D-glyceraldehyde 3-phosphate + L-glutamine = pyridoxal 5'-phosphate + L-glutamate + phosphate + 3 H2O + H(+). The catalysed reaction is L-glutamine + H2O = L-glutamate + NH4(+). It participates in cofactor biosynthesis; pyridoxal 5'-phosphate biosynthesis. Functionally, catalyzes the hydrolysis of glutamine to glutamate and ammonia as part of the biosynthesis of pyridoxal 5'-phosphate. The resulting ammonia molecule is channeled to the active site of PdxS. The chain is Pyridoxal 5'-phosphate synthase subunit PdxT from Methanosarcina mazei (strain ATCC BAA-159 / DSM 3647 / Goe1 / Go1 / JCM 11833 / OCM 88) (Methanosarcina frisia).